A 105-amino-acid chain; its full sequence is Large ribosomal subunit protein uL24 (105 aa).

It belongs to the universal ribosomal protein uL24 family. As to quaternary structure, part of the 50S ribosomal subunit.

One of two assembly initiator proteins, it binds directly to the 5'-end of the 23S rRNA, where it nucleates assembly of the 50S subunit. Its function is as follows. One of the proteins that surrounds the polypeptide exit tunnel on the outside of the subunit. The polypeptide is Large ribosomal subunit protein uL24 (Parvibaculum lavamentivorans (strain DS-1 / DSM 13023 / NCIMB 13966)).